A 175-amino-acid chain; its full sequence is Inorganic pyrophosphatase (175 aa).

Residues lysine 30, arginine 44, and tyrosine 56 each contribute to the substrate site. 3 residues coordinate Mg(2+): aspartate 66, aspartate 71, and aspartate 103. Tyrosine 142 lines the substrate pocket.

The protein belongs to the PPase family. Homohexamer. Requires Mg(2+) as cofactor.

It localises to the cytoplasm. The enzyme catalyses diphosphate + H2O = 2 phosphate + H(+). Its function is as follows. Catalyzes the hydrolysis of inorganic pyrophosphate (PPi) forming two phosphate ions. The chain is Inorganic pyrophosphatase from Pseudomonas aeruginosa (strain ATCC 15692 / DSM 22644 / CIP 104116 / JCM 14847 / LMG 12228 / 1C / PRS 101 / PAO1).